The sequence spans 503 residues: Adenosine deaminase 2-A (503 aa).

An N-terminal signal peptide occupies residues 1–24 (MHVLFLGDLMWIYLLLLCCASCNG). 2 residues coordinate Zn(2+): histidine 105 and histidine 107. A substrate-binding site is contributed by aspartate 108. N-linked (GlcNAc...) asparagine glycosylation is present at asparagine 120. A disulfide bond links cysteine 130 and cysteine 152. N-linked (GlcNAc...) asparagine glycans are attached at residues asparagine 167 and asparagine 178. Residues 197-204 (WERFEQVF) and histidine 286 each bind substrate. Asparagine 290 is a glycosylation site (N-linked (GlcNAc...) asparagine). Glycine 319 provides a ligand contact to substrate. Histidine 349 serves as a coordination point for Zn(2+). Glutamate 352 acts as the Proton donor in catalysis. Asparagine 371 carries an N-linked (GlcNAc...) asparagine glycan. Histidine 377 serves as the catalytic Proton acceptor. Aspartate 434 contacts Zn(2+). Aspartate 435 contributes to the substrate binding site.

The protein belongs to the metallo-dependent hydrolases superfamily. Adenosine and AMP deaminases family. ADGF subfamily. Requires Zn(2+) as cofactor.

It localises to the secreted. The enzyme catalyses adenosine + H2O + H(+) = inosine + NH4(+). Functionally, adenosine deaminase that may contribute to the degradation of extracellular adenosine, a signaling molecule that controls a variety of cellular responses. May play a role in the regulation of cell proliferation. This is Adenosine deaminase 2-A from Danio rerio (Zebrafish).